The sequence spans 302 residues: Bifunctional protein FolD (302 aa).

NADP(+) is bound by residues G165–S167, S190, and I231.

It belongs to the tetrahydrofolate dehydrogenase/cyclohydrolase family. Homodimer.

It carries out the reaction (6R)-5,10-methylene-5,6,7,8-tetrahydrofolate + NADP(+) = (6R)-5,10-methenyltetrahydrofolate + NADPH. The catalysed reaction is (6R)-5,10-methenyltetrahydrofolate + H2O = (6R)-10-formyltetrahydrofolate + H(+). It participates in one-carbon metabolism; tetrahydrofolate interconversion. Catalyzes the oxidation of 5,10-methylenetetrahydrofolate to 5,10-methenyltetrahydrofolate and then the hydrolysis of 5,10-methenyltetrahydrofolate to 10-formyltetrahydrofolate. This Prochlorococcus marinus (strain MIT 9313) protein is Bifunctional protein FolD.